The following is a 259-amino-acid chain: Protein unc-50 homolog (259 aa).

Residue Met1 is modified to N-acetylmethionine. Residues 1–82 are Cytoplasmic-facing; the sequence is MLPSTSVNSL…TKDQWARDDP (82 aa). Position 6 is a phosphoserine (Ser6). A helical membrane pass occupies residues 83–103; that stretch reads AFLVLLSIWLCVSTIGFGFVL. The Lumenal portion of the chain corresponds to 104–115; that stretch reads DMGFFETIKLLL. The chain crosses the membrane as a helical span at residues 116–136; sequence WVVLIDCVGVGLLIATLMWFI. Residues 137–163 are Cytoplasmic-facing; it reads SNKYLVKRQSRDYDVEWGYAFDVHLNA. Residues 164-184 traverse the membrane as a helical segment; it reads FYPLLVILHFIQLFFINHVIL. At 185–187 the chain is on the lumenal side; it reads TDT. Residues 188–208 form a helical membrane-spanning segment; it reads FIGYLVGNTLWLVAVGYYIYV. At 209-222 the chain is on the cytoplasmic side; the sequence is TFLGYSALPFLKNT. The chain crosses the membrane as a helical span at residues 223 to 243; sequence VILLYPFAPLILLYGLSLALG. The Lumenal portion of the chain corresponds to 244–259; sequence WNFTHTLCSFYKYRVK.

Belongs to the unc-50 family. In terms of tissue distribution, present in periodontal ligament fibroblasts (at protein level).

The protein resides in the nucleus inner membrane. It localises to the golgi apparatus membrane. Its function is as follows. Involved in the cell surface expression of neuronal nicotinic receptors. Binds RNA. This Homo sapiens (Human) protein is Protein unc-50 homolog (UNC50).